The chain runs to 289 residues: ATP synthase subunit a (289 aa).

Transmembrane regions (helical) follow at residues 43-63, 103-123, 160-180, 193-213, 232-252, and 259-279; these read AFHL…LLIF, VIAP…AVDL, FCVF…GGFI, IFVQ…TLIA, VFIL…GLGV, and AVFH…LTIV.

This sequence belongs to the ATPase A chain family. F-type ATPases have 2 components, CF(1) - the catalytic core - and CF(0) - the membrane proton channel. CF(1) has five subunits: alpha(3), beta(3), gamma(1), delta(1), epsilon(1). CF(0) has three main subunits: a(1), b(2) and c(9-12). The alpha and beta chains form an alternating ring which encloses part of the gamma chain. CF(1) is attached to CF(0) by a central stalk formed by the gamma and epsilon chains, while a peripheral stalk is formed by the delta and b chains.

The protein localises to the cell inner membrane. In terms of biological role, key component of the proton channel; it plays a direct role in the translocation of protons across the membrane. The sequence is that of ATP synthase subunit a from Pseudomonas putida (strain ATCC 700007 / DSM 6899 / JCM 31910 / BCRC 17059 / LMG 24140 / F1).